The primary structure comprises 347 residues: Histidinol-phosphate aminotransferase (347 aa).

K209 carries the N6-(pyridoxal phosphate)lysine modification.

The protein belongs to the class-II pyridoxal-phosphate-dependent aminotransferase family. Histidinol-phosphate aminotransferase subfamily. In terms of assembly, homodimer. Pyridoxal 5'-phosphate serves as cofactor.

The catalysed reaction is L-histidinol phosphate + 2-oxoglutarate = 3-(imidazol-4-yl)-2-oxopropyl phosphate + L-glutamate. Its pathway is amino-acid biosynthesis; L-histidine biosynthesis; L-histidine from 5-phospho-alpha-D-ribose 1-diphosphate: step 7/9. The protein is Histidinol-phosphate aminotransferase of Syntrophotalea carbinolica (strain DSM 2380 / NBRC 103641 / GraBd1) (Pelobacter carbinolicus).